The primary structure comprises 171 residues: 3-hydroxydecanoyl-[acyl-carrier-protein] dehydratase (171 aa).

His70 is a catalytic residue.

It belongs to the thioester dehydratase family. FabA subfamily. Homodimer.

Its subcellular location is the cytoplasm. The catalysed reaction is a (3R)-hydroxyacyl-[ACP] = a (2E)-enoyl-[ACP] + H2O. The enzyme catalyses (3R)-hydroxydecanoyl-[ACP] = (2E)-decenoyl-[ACP] + H2O. It catalyses the reaction (2E)-decenoyl-[ACP] = (3Z)-decenoyl-[ACP]. Its pathway is lipid metabolism; fatty acid biosynthesis. Necessary for the introduction of cis unsaturation into fatty acids. Catalyzes the dehydration of (3R)-3-hydroxydecanoyl-ACP to E-(2)-decenoyl-ACP and then its isomerization to Z-(3)-decenoyl-ACP. Can catalyze the dehydratase reaction for beta-hydroxyacyl-ACPs with saturated chain lengths up to 16:0, being most active on intermediate chain length. The sequence is that of 3-hydroxydecanoyl-[acyl-carrier-protein] dehydratase from Shewanella sediminis (strain HAW-EB3).